A 398-amino-acid chain; its full sequence is Lipase member K (398 aa).

An N-terminal signal peptide occupies residues 1-19 (MWWLLATTCCVLLSGPIDG). The 300-residue stretch at 78–377 (VVYLQHGLIA…HYNHMDFYLG (300 aa)) folds into the AB hydrolase-1 domain. Ser-171 functions as the Nucleophile in the catalytic mechanism. The cysteines at positions 245 and 254 are disulfide-linked. N-linked (GlcNAc...) asparagine glycans are attached at residues Asn-270 and Asn-326. Active-site charge relay system residues include Asp-342 and His-371.

The protein belongs to the AB hydrolase superfamily. Lipase family.

The protein resides in the secreted. Its function is as follows. Plays a highly specific role in the last step of keratinocyte differentiation. May have an essential function in lipid metabolism of the most differentiated epidermal layers. The polypeptide is Lipase member K (Lipk) (Mus musculus (Mouse)).